Reading from the N-terminus, the 318-residue chain is GTP 3',8-cyclase (318 aa).

A Radical SAM core domain is found at 4 to 218 (KHGRNIDYLR…MSRSDLIPIE (215 aa)). R13 contacts GTP. [4Fe-4S] cluster contacts are provided by C20 and C24. Position 26 (Y26) interacts with S-adenosyl-L-methionine. C27 lines the [4Fe-4S] cluster pocket. GTP is bound at residue R62. G66 contributes to the S-adenosyl-L-methionine binding site. T93 is a GTP binding site. S117 lines the S-adenosyl-L-methionine pocket. A GTP-binding site is contributed by K154. An S-adenosyl-L-methionine-binding site is contributed by M188. C248 and C251 together coordinate [4Fe-4S] cluster. 253 to 255 (KIR) contributes to the GTP binding site. A [4Fe-4S] cluster-binding site is contributed by C265.

Belongs to the radical SAM superfamily. MoaA family. In terms of assembly, monomer and homodimer. [4Fe-4S] cluster serves as cofactor.

The enzyme catalyses GTP + AH2 + S-adenosyl-L-methionine = (8S)-3',8-cyclo-7,8-dihydroguanosine 5'-triphosphate + 5'-deoxyadenosine + L-methionine + A + H(+). It participates in cofactor biosynthesis; molybdopterin biosynthesis. In terms of biological role, catalyzes the cyclization of GTP to (8S)-3',8-cyclo-7,8-dihydroguanosine 5'-triphosphate. The sequence is that of GTP 3',8-cyclase from Clostridium acetobutylicum (strain ATCC 824 / DSM 792 / JCM 1419 / IAM 19013 / LMG 5710 / NBRC 13948 / NRRL B-527 / VKM B-1787 / 2291 / W).